Reading from the N-terminus, the 160-residue chain is ATP synthase subunit b (160 aa).

Residues 13 to 33 (VNLAIVIGVLVWFLRGFLGGI) form a helical membrane-spanning segment.

It belongs to the ATPase B chain family. In terms of assembly, F-type ATPases have 2 components, F(1) - the catalytic core - and F(0) - the membrane proton channel. F(1) has five subunits: alpha(3), beta(3), gamma(1), delta(1), epsilon(1). F(0) has four main subunits: a(1), b(1), b'(1) and c(10-14). The alpha and beta chains form an alternating ring which encloses part of the gamma chain. F(1) is attached to F(0) by a central stalk formed by the gamma and epsilon chains, while a peripheral stalk is formed by the delta, b and b' chains.

It localises to the cellular thylakoid membrane. Functionally, f(1)F(0) ATP synthase produces ATP from ADP in the presence of a proton or sodium gradient. F-type ATPases consist of two structural domains, F(1) containing the extramembraneous catalytic core and F(0) containing the membrane proton channel, linked together by a central stalk and a peripheral stalk. During catalysis, ATP synthesis in the catalytic domain of F(1) is coupled via a rotary mechanism of the central stalk subunits to proton translocation. In terms of biological role, component of the F(0) channel, it forms part of the peripheral stalk, linking F(1) to F(0). The protein is ATP synthase subunit b of Parasynechococcus marenigrum (strain WH8102).